A 277-amino-acid polypeptide reads, in one-letter code: Heme oxygenase (277 aa).

H29 lines the heme b pocket.

The protein belongs to the heme oxygenase family.

The protein localises to the microsome. It localises to the endoplasmic reticulum. The catalysed reaction is heme b + 3 reduced [NADPH--hemoprotein reductase] + 3 O2 = biliverdin IXalpha + CO + Fe(2+) + 3 oxidized [NADPH--hemoprotein reductase] + 3 H2O + H(+). In terms of biological role, heme oxygenase cleaves the heme ring at the alpha methene bridge to form biliverdin. Biliverdin is subsequently converted to bilirubin by biliverdin reductase. Under physiological conditions, the activity of heme oxygenase is highest in the spleen, where senescent erythrocytes are sequestrated and destroyed. This Takifugu rubripes (Japanese pufferfish) protein is Heme oxygenase (hmox).